The chain runs to 89 residues: Small ribosomal subunit protein uS14A (89 aa).

Belongs to the universal ribosomal protein uS14 family. As to quaternary structure, part of the 30S ribosomal subunit. Contacts proteins S3 and S10.

Functionally, binds 16S rRNA, required for the assembly of 30S particles and may also be responsible for determining the conformation of the 16S rRNA at the A site. This is Small ribosomal subunit protein uS14A from Listeria innocua serovar 6a (strain ATCC BAA-680 / CLIP 11262).